Reading from the N-terminus, the 707-residue chain is Probable potassium transporter 17 (707 aa).

Residues 1–25 (MDLEAGSIRPRSDGEGGGPAAGRET) form a disordered region. At 1–34 (MDLEAGSIRPRSDGEGGGPAAGRETDDSNVWKDL) the chain is on the cytoplasmic side. Residues 35-55 (FLAYKTLGVVFGGLVTSPLYV) form a helical membrane-spanning segment. Residues 56-71 (YPSMNLSSPTEADYLG) lie on the Extracellular side of the membrane. An N-linked (GlcNAc...) asparagine glycan is attached at asparagine 60. Residues 72-92 (IYSIMFWTLTLIGVVKYVCIA) traverse the membrane as a helical segment. Residues 93–157 (LNADDHGEGG…FFEQSITARR (65 aa)) are Cytoplasmic-facing. Residues 158–178 (VLLFVAVLGMCMLIGDGILTP) traverse the membrane as a helical segment. The Extracellular segment spans residues 179 to 194 (AISVLSAIDGIRGPFP). A helical transmembrane segment spans residues 195–215 (TVSKPVVEALSAAILIGLFLL). The Cytoplasmic segment spans residues 216-222 (QKYGTSK). The chain crosses the membrane as a helical span at residues 223–243 (VSFLFSPIMAAWTFTTPIIGL). Residues 244 to 276 (YSIVHYYPGIFKAISPYYIVHFFLRNKRQGWQL) lie on the Extracellular side of the membrane. A helical transmembrane segment spans residues 277–297 (LGGTVLCITGAEAMFADLGHF). Topologically, residues 298-305 (SKKAIQIA) are cytoplasmic. Residues 306–326 (FLSSIYPSLVLTYAGQTAYLI) traverse the membrane as a helical segment. The Extracellular portion of the chain corresponds to 327-343 (NNVNDFGDGFYKFVPRP). A helical membrane pass occupies residues 344–364 (VYWPMFVVATLAAIVASQSLI). Residues 365-402 (SATFSVIKQSVVLDYFPRVKVVHTSQHKEGEVYSPEIN) are Cytoplasmic-facing. Residues 403 to 423 (YILMVLCVGVILGFGGGKAIG) form a helical membrane-spanning segment. Residues 424–427 (NAFG) are Extracellular-facing. The helical transmembrane segment at 428–448 (VVVIMVMLITTVLLTLVMIII) threads the bilayer. Residues 449-454 (WRTPLV) are Cytoplasmic-facing. Residues 455–475 (LAGLYFVPFFIMEGAYVSAVF) traverse the membrane as a helical segment. Over 476–480 (TKIPE) the chain is Extracellular. Residues 481–501 (GGWLPFAVSITLAMIMFGWYY) traverse the membrane as a helical segment. Topologically, residues 502–707 (GRQRKFEYEM…RVEIGMLYKV (206 aa)) are cytoplasmic.

It belongs to the HAK/KUP transporter (TC 2.A.72.3) family.

The protein resides in the membrane. Its function is as follows. High-affinity potassium transporter. The chain is Probable potassium transporter 17 (HAK17) from Oryza sativa subsp. japonica (Rice).